We begin with the raw amino-acid sequence, 284 residues long: Tryptophan synthase alpha chain (284 aa).

Active-site proton acceptor residues include E59 and D70.

The protein belongs to the TrpA family. As to quaternary structure, tetramer of two alpha and two beta chains.

It carries out the reaction (1S,2R)-1-C-(indol-3-yl)glycerol 3-phosphate + L-serine = D-glyceraldehyde 3-phosphate + L-tryptophan + H2O. Its pathway is amino-acid biosynthesis; L-tryptophan biosynthesis; L-tryptophan from chorismate: step 5/5. Functionally, the alpha subunit is responsible for the aldol cleavage of indoleglycerol phosphate to indole and glyceraldehyde 3-phosphate. This Azospirillum brasilense protein is Tryptophan synthase alpha chain.